Here is a 109-residue protein sequence, read N- to C-terminus: Major allergen I polypeptide chain 2 (109 aa).

The N-terminal stretch at 1–17 (MRGALLVLALLVTQALG) is a signal peptide. A glycan (N-linked (GlcNAc...) asparagine) is linked at asparagine 50.

It belongs to the secretoglobin family. As to quaternary structure, heterotetramer composed of two non-covalently linked disulfide-linked heterodimer of chains 1 and 2. The long form is preferentially expressed in the salivary gland, while the short form is preferentially expressed in the skin.

It is found in the secreted. This chain is Major allergen I polypeptide chain 2 (CH2), found in Felis catus (Cat).